A 165-amino-acid polypeptide reads, in one-letter code: MARIRLGKVVRAVGLKGHLGVAGSEGALATVRRIALRREGEPEPPLQEVLEARPQGRLWAVRIEGVSDRTSAEAWVGAEVLALREDLPEAGEARHYWADLEGLPVVTVAGAAIGTVTGLYETGGVDVLVVTTEEGGEKLVPLAPYVEVDVAGRRVVVDPPEGLLD.

The 72-residue stretch at 92–163 (EARHYWADLE…RVVVDPPEGL (72 aa)) folds into the PRC barrel domain.

This sequence belongs to the RimM family. As to quaternary structure, binds ribosomal protein uS19.

Its subcellular location is the cytoplasm. In terms of biological role, an accessory protein needed during the final step in the assembly of 30S ribosomal subunit, possibly for assembly of the head region. Essential for efficient processing of 16S rRNA. May be needed both before and after RbfA during the maturation of 16S rRNA. It has affinity for free ribosomal 30S subunits but not for 70S ribosomes. The protein is Ribosome maturation factor RimM of Anaeromyxobacter sp. (strain Fw109-5).